Consider the following 157-residue polypeptide: Endoribonuclease YbeY (157 aa).

Zn(2+) is bound by residues His114, His118, and His124.

This sequence belongs to the endoribonuclease YbeY family. Zn(2+) serves as cofactor.

Its subcellular location is the cytoplasm. Functionally, single strand-specific metallo-endoribonuclease involved in late-stage 70S ribosome quality control and in maturation of the 3' terminus of the 16S rRNA. The protein is Endoribonuclease YbeY of Klebsiella pneumoniae (strain 342).